A 67-amino-acid chain; its full sequence is Large ribosomal subunit protein bL35 (67 aa).

Basic residues predominate over residues 1 to 16; sequence MPKMKTKSSAKKRFRV. Positions 1–24 are disordered; sequence MPKMKTKSSAKKRFRVRPGGTVKR.

Belongs to the bacterial ribosomal protein bL35 family.

The polypeptide is Large ribosomal subunit protein bL35 (Paracidovorax citrulli (strain AAC00-1) (Acidovorax citrulli)).